The primary structure comprises 282 residues: 4-deoxy-L-threo-5-hexosulose-uronate ketol-isomerase 2 (282 aa).

Zn(2+) contacts are provided by histidine 200, histidine 202, glutamate 207, and histidine 249.

The protein belongs to the KduI family. Requires Zn(2+) as cofactor.

It carries out the reaction 5-dehydro-4-deoxy-D-glucuronate = 3-deoxy-D-glycero-2,5-hexodiulosonate. The protein operates within glycan metabolism; pectin degradation; 2-dehydro-3-deoxy-D-gluconate from pectin: step 4/5. In terms of biological role, catalyzes the isomerization of 5-dehydro-4-deoxy-D-glucuronate to 3-deoxy-D-glycero-2,5-hexodiulosonate. The polypeptide is 4-deoxy-L-threo-5-hexosulose-uronate ketol-isomerase 2 (kduI2) (Rhizobium meliloti (strain 1021) (Ensifer meliloti)).